A 207-amino-acid chain; its full sequence is Small ribosomal subunit protein uS3 (207 aa).

Residues 17 to 86 (IDEYLEKELR…NPQIEVEEIK (70 aa)) form the KH type-2 domain.

This sequence belongs to the universal ribosomal protein uS3 family. In terms of assembly, part of the 30S ribosomal subunit.

In terms of biological role, binds the lower part of the 30S subunit head. The polypeptide is Small ribosomal subunit protein uS3 (Thermococcus sibiricus (strain DSM 12597 / MM 739)).